The following is a 237-amino-acid chain: Sugar fermentation stimulation protein homolog (237 aa).

Belongs to the SfsA family.

The polypeptide is Sugar fermentation stimulation protein homolog (Pseudomonas savastanoi pv. phaseolicola (strain 1448A / Race 6) (Pseudomonas syringae pv. phaseolicola (strain 1448A / Race 6))).